The following is a 211-amino-acid chain: ATP-dependent Clp protease proteolytic subunit 1 (211 aa).

Residue Ser107 is the Nucleophile of the active site. Residue His132 is part of the active site.

The protein belongs to the peptidase S14 family. As to quaternary structure, fourteen ClpP subunits assemble into 2 heptameric rings which stack back to back to give a disk-like structure with a central cavity, resembling the structure of eukaryotic proteasomes.

The protein localises to the cytoplasm. It carries out the reaction Hydrolysis of proteins to small peptides in the presence of ATP and magnesium. alpha-casein is the usual test substrate. In the absence of ATP, only oligopeptides shorter than five residues are hydrolyzed (such as succinyl-Leu-Tyr-|-NHMec, and Leu-Tyr-Leu-|-Tyr-Trp, in which cleavage of the -Tyr-|-Leu- and -Tyr-|-Trp bonds also occurs).. In terms of biological role, cleaves peptides in various proteins in a process that requires ATP hydrolysis. Has a chymotrypsin-like activity. Plays a major role in the degradation of misfolded proteins. The protein is ATP-dependent Clp protease proteolytic subunit 1 of Mycolicibacterium paratuberculosis (strain ATCC BAA-968 / K-10) (Mycobacterium paratuberculosis).